Here is a 43-residue protein sequence, read N- to C-terminus: Metallothionein-2 (43 aa).

Residue M1 is modified to Blocked amino end (Met).

The protein belongs to the metallothionein superfamily. Type 5 family.

Functionally, this protein binds cations of several transition elements. Thought to be involved in metal ion homeostasis. The chain is Metallothionein-2 (MtnB) from Drosophila melanogaster (Fruit fly).